Consider the following 270-residue polypeptide: Putative phosphoenolpyruvate synthase regulatory protein (270 aa).

150–157 is an ADP binding site; it reads GVSRCGKT.

Belongs to the pyruvate, phosphate/water dikinase regulatory protein family. PSRP subfamily.

The catalysed reaction is [pyruvate, water dikinase] + ADP = [pyruvate, water dikinase]-phosphate + AMP + H(+). It catalyses the reaction [pyruvate, water dikinase]-phosphate + phosphate + H(+) = [pyruvate, water dikinase] + diphosphate. Its function is as follows. Bifunctional serine/threonine kinase and phosphorylase involved in the regulation of the phosphoenolpyruvate synthase (PEPS) by catalyzing its phosphorylation/dephosphorylation. In Shewanella sp. (strain ANA-3), this protein is Putative phosphoenolpyruvate synthase regulatory protein.